The chain runs to 563 residues: (R)-mandelonitrile lyase 2 (563 aa).

The first 27 residues, 1–27, serve as a signal peptide directing secretion; that stretch reads MEKSTMSAILLVLYIFVLHLQYSEVHS. FAD-binding positions include 63–64, 82–83, Val-129, Thr-133, and 137–140; these read TS, ER, and NAGV. Residues Asn-145 and Asn-162 are each glycosylated (N-linked (GlcNAc...) asparagine). Val-244 is an FAD binding site. Cys-355 lines the substrate pocket. N-linked (GlcNAc...) asparagine glycosylation is found at Asn-379 and Asn-419. Cys-426 and Cys-477 are oxidised to a cystine. Tyr-484 contacts substrate. FAD-binding positions include 485–486 and Gly-514; that span reads WH. His-486 acts as the Proton donor in catalysis. The active-site Proton acceptor is His-524. Residue 525–526 participates in FAD binding; it reads PQ.

Belongs to the GMC oxidoreductase family. In terms of assembly, monomer. Requires FAD as cofactor. In terms of processing, glycosylated. Deglycosylation does not affect the enzymatic activity.

The enzyme catalyses (R)-mandelonitrile = benzaldehyde + hydrogen cyanide. Its function is as follows. Involved in cyanogenesis, the release of HCN from injured tissues. Catalyzes the stereospecific addition of HCN to a variety of aldehydes in vitro. Has no oxidase activity. The redox properties of the FAD cofactor appear to be unimportant for catalysis. The sequence is that of (R)-mandelonitrile lyase 2 (MDL2) from Prunus dulcis (Almond).